The following is a 431-amino-acid chain: Probable sodium/metabolite cotransporter BASS3, chloroplastic (431 aa).

The transit peptide at 1-70 (MTLIASLSLP…RRNSGLVPVV (70 aa)) directs the protein to the chloroplast. The next 9 helical transmembrane spans lie at 110 to 130 (FWSALLPFVVALTAVAALSYP), 145 to 165 (LGGIMLSIGIQLSVDDFALAF), 169 to 189 (VPLSVGFVAQYVLKPLLGVLV), 198 to 218 (TFYAGFILTCCVAGAQLSSYA), 238 to 258 (IASVIFTPLLSGLLIGSVVPV), 261 to 281 (VAMSKSILQVVLVPITLGLVL), 288 to 308 (VVTLLQPVMPFVAMVCTSLCI), 325 to 345 (LGLIVPIVTFHAVAFALGYWF), and 387 to 407 (VPAACSVVVMAIMGLCLASFW).

Belongs to the bile acid:sodium symporter (BASS) (TC 2.A.28) family.

It localises to the membrane. Its subcellular location is the plastid. The protein resides in the chloroplast envelope. Its function is as follows. May function as sodium-coupled metabolite transporter across the chloroplast envelope. In Arabidopsis thaliana (Mouse-ear cress), this protein is Probable sodium/metabolite cotransporter BASS3, chloroplastic (BASS3).